Consider the following 75-residue polypeptide: Putative DNA-directed RNA polymerase subunit omega (75 aa).

The protein belongs to the RNA polymerase subunit omega family.

The protein resides in the plastid. Its subcellular location is the chloroplast. It carries out the reaction RNA(n) + a ribonucleoside 5'-triphosphate = RNA(n+1) + diphosphate. May be involved in RNA polymerase activity. The polypeptide is Putative DNA-directed RNA polymerase subunit omega (rpoZ) (Porphyra purpurea (Red seaweed)).